A 182-amino-acid polypeptide reads, in one-letter code: Protein GrpE (182 aa).

The interval 1–35 is disordered; it reads MTQENQTPPPEQENLAADPAVETTAETPAVKTPEQ.

Belongs to the GrpE family. Homodimer.

It localises to the cytoplasm. Participates actively in the response to hyperosmotic and heat shock by preventing the aggregation of stress-denatured proteins, in association with DnaK and GrpE. It is the nucleotide exchange factor for DnaK and may function as a thermosensor. Unfolded proteins bind initially to DnaJ; upon interaction with the DnaJ-bound protein, DnaK hydrolyzes its bound ATP, resulting in the formation of a stable complex. GrpE releases ADP from DnaK; ATP binding to DnaK triggers the release of the substrate protein, thus completing the reaction cycle. Several rounds of ATP-dependent interactions between DnaJ, DnaK and GrpE are required for fully efficient folding. This Polynucleobacter necessarius subsp. necessarius (strain STIR1) protein is Protein GrpE.